A 181-amino-acid polypeptide reads, in one-letter code: Calmodulin-like protein 6 (181 aa).

4 EF-hand domains span residues 33 to 68 (EQIK…LGIN), 69 to 104 (PTKS…YHEK), 107 to 142 (NQES…AGEP), and 143 to 178 (LNEV…ESFK). Positions 156, 158, 160, 162, and 167 each coordinate Ca(2+).

Belongs to the calmodulin family. Calglandulin subfamily. In terms of tissue distribution, expressed in prostate, thymus, heart, skeleton muscle, bone marrow and ovary.

It localises to the cytoplasm. The protein localises to the nucleus. This Homo sapiens (Human) protein is Calmodulin-like protein 6 (CALML6).